Consider the following 444-residue polypeptide: Ribulose bisphosphate carboxylase large chain (444 aa).

Position 5 is an N6,N6,N6-trimethyllysine (Lys-5). Positions 114 and 164 each coordinate substrate. Lys-166 functions as the Proton acceptor in the catalytic mechanism. Substrate is bound at residue Lys-168. Residues Lys-192, Asp-194, and Glu-195 each coordinate Mg(2+). Lys-192 carries the post-translational modification N6-carboxylysine. The Proton acceptor role is filled by His-285. Substrate contacts are provided by Arg-286, His-318, and Ser-370.

Belongs to the RuBisCO large chain family. Type I subfamily. Heterohexadecamer of 8 large chains and 8 small chains; disulfide-linked. The disulfide link is formed within the large subunit homodimers. Mg(2+) is required as a cofactor. Post-translationally, the disulfide bond which can form in the large chain dimeric partners within the hexadecamer appears to be associated with oxidative stress and protein turnover.

Its subcellular location is the plastid. The protein resides in the chloroplast. It catalyses the reaction 2 (2R)-3-phosphoglycerate + 2 H(+) = D-ribulose 1,5-bisphosphate + CO2 + H2O. It carries out the reaction D-ribulose 1,5-bisphosphate + O2 = 2-phosphoglycolate + (2R)-3-phosphoglycerate + 2 H(+). Functionally, ruBisCO catalyzes two reactions: the carboxylation of D-ribulose 1,5-bisphosphate, the primary event in carbon dioxide fixation, as well as the oxidative fragmentation of the pentose substrate in the photorespiration process. Both reactions occur simultaneously and in competition at the same active site. In Ginkgo biloba (Ginkgo), this protein is Ribulose bisphosphate carboxylase large chain.